Here is a 546-residue protein sequence, read N- to C-terminus: DDB1- and CUL4-associated factor 11 (546 aa).

Polar residues predominate over residues 1–10; sequence MGSRNSSSAG. The tract at residues 1–40 is disordered; the sequence is MGSRNSSSAGTGSGDPSEGLPRRGAGLRRSEEEEEEDEDV. Residues serine 73 and serine 75 each carry the phosphoserine modification. Residues 79-100 form a disordered region; the sequence is HDSAWDGRLGDRYNPPVDATPD. Residues 80 to 89 show a composition bias toward basic and acidic residues; sequence DSAWDGRLGD. WD repeat units follow at residues 170–210, 216–258, 263–302, 305–345, 353–392, 435–480, and 481–520; these read TYSQ…RKFK, DVGW…TALD, ERRF…RTLQ, SHED…EDDP, GHQD…SREG, GVLH…KKLT, and THKA…YFQD. Positions 521 to 546 are disordered; sequence DMPESEEHPSTPAPMSHPSTAFSSPQ. Residues 537–546 show a composition bias toward polar residues; it reads HPSTAFSSPQ.

Interacts with DDB1 and CUL4A.

Its pathway is protein modification; protein ubiquitination. Its function is as follows. May function as a substrate receptor for CUL4-DDB1 E3 ubiquitin-protein ligase complex. The polypeptide is DDB1- and CUL4-associated factor 11 (DCAF11) (Bos taurus (Bovine)).